The sequence spans 271 residues: ELH (271 aa).

Positions 1–28 (MKRPNNRPTNTMSLILCLTLSSLCVSSQ) are cleaved as a signal peptide. 2 propeptides span residues 29–95 (SASV…NEKR) and 162–184 (AAGGMEQSEGQNPETESHSRRKR). A disordered region spans residues 162-190 (AAGGMEQSEGQNPETESHSRRKRSVLTPS). Lys-241 bears the Lysine amide mark.

This sequence belongs to the molluscan ELH family. Bag cell neurons.

The protein localises to the secreted. ELH acts as a neurotransmitter locally, upon neurons of the abdominal ganglion and as a hormone by diffusing into the circulating hemolymph and modulating the activity of other organs. It specifically causes contraction of smooth muscle in the ovotestis and expulsion of the egg string. Its function is as follows. Alpha-BCP decreases the activity of a cluster of neurons in the left upper quadrant of the abdominal ganglion. Functionally, beta-BCP specifically excites 2 neurons, L1 and R1, in the abdominal ganglion. The protein is ELH of Aplysia californica (California sea hare).